We begin with the raw amino-acid sequence, 313 residues long: Methionyl-tRNA formyltransferase (313 aa).

110 to 113 provides a ligand contact to (6S)-5,6,7,8-tetrahydrofolate; it reads SLLP.

Belongs to the Fmt family.

The enzyme catalyses L-methionyl-tRNA(fMet) + (6R)-10-formyltetrahydrofolate = N-formyl-L-methionyl-tRNA(fMet) + (6S)-5,6,7,8-tetrahydrofolate + H(+). Functionally, attaches a formyl group to the free amino group of methionyl-tRNA(fMet). The formyl group appears to play a dual role in the initiator identity of N-formylmethionyl-tRNA by promoting its recognition by IF2 and preventing the misappropriation of this tRNA by the elongation apparatus. This chain is Methionyl-tRNA formyltransferase, found in Enterococcus faecalis (strain ATCC 700802 / V583).